Here is a 2559-residue protein sequence, read N- to C-terminus: Stabilin-2 (2559 aa).

The first 28 residues, 1 to 28 (MARSKLLLGKLLPLILIFLGLLVQNACS), serve as a signal peptide directing secretion. Over 29-2464 (PTEAPELTKR…PPTAATAAHS (2436 aa)) the chain is Extracellular. Asparagine 71 is a glycosylation site (N-linked (GlcNAc...) asparagine). EGF-like domains lie at 116–156 (DCME…TACE), 164–201 (FGPN…PRCD), 203–244 (PIPE…QTCK), 245–284 (PINP…QVCL), and 330–370 (MTDI…LNCY). 3 disulfide bridges follow: cysteine 120–cysteine 134, cysteine 128–cysteine 144, and cysteine 146–cysteine 155. An N-linked (GlcNAc...) asparagine glycan is attached at asparagine 167. Intrachain disulfides connect cysteine 168–cysteine 179, cysteine 172–cysteine 189, cysteine 191–cysteine 200, cysteine 207–cysteine 218, cysteine 212–cysteine 230, cysteine 232–cysteine 243, cysteine 249–cysteine 260, cysteine 254–cysteine 270, cysteine 272–cysteine 283, cysteine 334–cysteine 346, cysteine 340–cysteine 356, and cysteine 358–cysteine 369. An N-linked (GlcNAc...) asparagine glycan is attached at asparagine 345. FAS1 domains lie at 379–512 (ELNT…DRAM) and 522–659 (NPQQ…TGVL). N-linked (GlcNAc...) asparagine glycans are attached at residues asparagine 572, asparagine 626, asparagine 673, and asparagine 691. In terms of domain architecture, EGF-like 6 spans 743–783 (DCNPCPGGFMNPCSGNGQCIDGLGGNGTCICEDGFQGSRCQ). Intrachain disulfides connect cysteine 747-cysteine 761, cysteine 755-cysteine 771, and cysteine 773-cysteine 782. The N-linked (GlcNAc...) asparagine glycan is linked to asparagine 768. An N-linked (GlcNAc...) asparagine glycan is attached at asparagine 796. EGF-like domains lie at 833 to 873 (QTSA…TLCS), 874 to 917 (KKDP…RDCV), 918 to 960 (EINS…IDCE), and 961 to 1002 (PIIS…VLCY). 12 disulfides stabilise this stretch: cysteine 837–cysteine 850, cysteine 844–cysteine 859, cysteine 861–cysteine 872, cysteine 878–cysteine 893, cysteine 887–cysteine 903, cysteine 905–cysteine 916, cysteine 922–cysteine 936, cysteine 930–cysteine 946, cysteine 948–cysteine 959, cysteine 965–cysteine 978, cysteine 972–cysteine 988, and cysteine 990–cysteine 1001. The N-linked (GlcNAc...) asparagine glycan is linked to asparagine 854. N-linked (GlcNAc...) asparagine glycosylation is present at asparagine 933. FAS1 domains are found at residues 1002 to 1135 (YGNV…NKVL) and 1145 to 1273 (LPSL…EKVL). Asparagine 1024, asparagine 1036, asparagine 1108, asparagine 1255, and asparagine 1283 each carry an N-linked (GlcNAc...) asparagine glycan. The region spanning 1350 to 1415 (PQCQACPGKG…CSCVHGRCNQ (66 aa)) is the Laminin EGF-like 1 domain. 18 cysteine pairs are disulfide-bonded: cysteine 1355–cysteine 1369, cysteine 1363–cysteine 1379, cysteine 1381–cysteine 1390, cysteine 1402–cysteine 1413, cysteine 1406–cysteine 1423, cysteine 1425–cysteine 1434, cysteine 1443–cysteine 1453, cysteine 1447–cysteine 1463, cysteine 1465–cysteine 1476, cysteine 1482–cysteine 1495, cysteine 1489–cysteine 1505, cysteine 1507–cysteine 1518, cysteine 1524–cysteine 1537, cysteine 1531–cysteine 1547, cysteine 1549–cysteine 1560, cysteine 1566–cysteine 1579, cysteine 1573–cysteine 1589, and cysteine 1591–cysteine 1602. Asparagine 1374 and asparagine 1386 each carry an N-linked (GlcNAc...) asparagine glycan. 4 EGF-like domains span residues 1439–1477 (TTDN…TVCT), 1478–1519 (AINA…IVCL), 1520–1561 (EINP…KVCT), and 1562–1603 (LINV…IVCR). N-linked (GlcNAc...) asparagine glycosylation occurs at asparagine 1444. Residue asparagine 1472 is glycosylated (N-linked (GlcNAc...) asparagine). An N-linked (GlcNAc...) asparagine glycan is attached at asparagine 1580. 2 FAS1 domains span residues 1603-1731 (RGSI…DTLL) and 1747-1888 (VLLN…DCLL). Residue asparagine 1750 is glycosylated (N-linked (GlcNAc...) asparagine). The region spanning 1965 to 2030 (PDCQACPGGP…GCSEHGQCDE (66 aa)) is the Laminin EGF-like 2 domain. 17 disulfide bridges follow: cysteine 1970/cysteine 1984, cysteine 1978/cysteine 1994, cysteine 1996/cysteine 2005, cysteine 2017/cysteine 2028, cysteine 2022/cysteine 2038, cysteine 2040/cysteine 2049, cysteine 2059/cysteine 2069, cysteine 2063/cysteine 2075, cysteine 2077/cysteine 2088, cysteine 2094/cysteine 2107, cysteine 2101/cysteine 2116, cysteine 2118/cysteine 2129, cysteine 2135/cysteine 2149, cysteine 2143/cysteine 2159, cysteine 2161/cysteine 2172, cysteine 2228/cysteine 2296, and cysteine 2252/cysteine 2273. Asparagine 2001 carries an N-linked (GlcNAc...) asparagine glycan. EGF-like domains are found at residues 2055 to 2089 (VIPV…ITCT), 2090 to 2130 (VVDF…HSCT), and 2131 to 2173 (EIDP…RDCE). Asparagine 2072 carries N-linked (GlcNAc...) asparagine glycosylation. A Link domain is found at 2206 to 2298 (GVFHLRSPLG…SEMWDVFCYR (93 aa)). Asparagine 2287, asparagine 2303, asparagine 2375, asparagine 2391, and asparagine 2400 each carry an N-linked (GlcNAc...) asparagine glycan. One can recognise an FAS1 7 domain in the interval 2318-2452 (NGNLLQVLMS…GVLHIISEPL (135 aa)). The chain crosses the membrane as a helical span at residues 2465 to 2485 (GLGTGIFCAVVLVTGAIALAA). Residues 2486–2559 (YSYFRLNQRT…NSDPLGALRS (74 aa)) lie on the Cytoplasmic side of the membrane. Serine 2503 carries the post-translational modification Phosphoserine. Residues 2510 to 2520 (LAFGKQQPESI) are interaction with TMSB4X. The disordered stretch occupies residues 2514–2559 (KQQPESITNPLYETSTPAAPEPSCDPFTDSGERELENSDPLGALRS). Positions 2516-2530 (QPESITNPLYETSTP) are enriched in polar residues.

Interacts with heparin, alpha-M/beta-2 integrin (ITGAM and ITGB2), and thymosin beta 4 (TMSB4X). Interacts with GULP1. Associates with clathrin and adapter protein AP-2; in liver sinusoidal endothelial cells (LSECs). Glycosylated. In terms of processing, proteolytically processed to yield a smaller protein. Expressed in endothelial sinuses of liver, lymph nodes, bone marrow, spleen and in specialised structures of eye, heart, brain and kidney. Expression is detected in corneal and lens epithelium, in mesenchymal cells of the heart valves, in the ependymal cells lining the ventricles in the brain, and in the prismatic epithelial cells covering the renal papillae.

Its subcellular location is the cytoplasm. The protein localises to the cell membrane. Phosphatidylserine receptor that enhances the engulfment of apoptotic cells. Hyaluronan receptor that binds to and mediates endocytosis of hyaluronic acid (HA). Also acts, in different species, as a primary systemic scavenger receptor for heparin (Hep), chondroitin sulfate (CS), dermatan sulfate (DS), nonglycosaminoglycan (GAG), acetylated low-density lipoprotein (AcLDL), pro-collagen propeptides and advanced glycation end products (AGE). May serve to maintain tissue integrity by supporting extracellular matrix turnover or it may contribute to maintaining fluidity of bodily liquids by resorption of hyaluronan. Counter receptor which plays an important role in lymphocyte recruitment in the hepatic vasculature. Binds to both Gram-positive and Gram-negative bacteria and may play a role in defense against bacterial infection. The proteolytically processed short form also functions as an endocytosis receptor for heparin internalization as well as HA and CS. This is Stabilin-2 from Mus musculus (Mouse).